Reading from the N-terminus, the 416-residue chain is GTPase ERA1, chloroplastic (416 aa).

A chloroplast-targeting transit peptide spans 1 to 53 (MELGLALRLVAPPPLLPCLSRRALSLPPDFVSSRVLRGRRIHASRLKHGAGVV). The Era-type G domain occupies 117–287 (RSGYVAVLGK…KEWILSKLPL (171 aa)). The segment at 125 to 132 (GKPNVGKS) is G1. Residue 125–132 (GKPNVGKS) participates in GTP binding. Residues 151-155 (QTTRH) are G2. The interval 172–175 (DTPG) is G3. GTP contacts are provided by residues 172–176 (DTPGV) and 237–240 (NKKD). A G4 region spans residues 237-240 (NKKD). The G5 stretch occupies residues 266 to 268 (ISA). The 78-residue stretch at 318–395 (YRQEIPYSCQ…YLEVEVKVKE (78 aa)) folds into the KH type-2 domain.

It belongs to the TRAFAC class TrmE-Era-EngA-EngB-Septin-like GTPase superfamily. Era GTPase family.

The protein localises to the plastid. The protein resides in the chloroplast stroma. Its subcellular location is the chloroplast nucleoid. Functionally, nuclear genome-encoded probable GTPase involved in ribosome biogenesis in chloroplasts. Plays a role in 16S rRNA maturation in plastids and may contribute to the assembly of the small (30S) ribosomal subunit. The sequence is that of GTPase ERA1, chloroplastic from Zea mays (Maize).